We begin with the raw amino-acid sequence, 370 residues long: Cytochrome b (370 aa).

Transmembrane regions (helical) follow at residues F25 to V45, W69 to I90, W105 to L125, and F170 to L190. Heme b-binding residues include H75 and H89. Residues H174 and H188 each contribute to the heme b site. A ubiquinone is bound at residue H193. The next 4 membrane-spanning stretches (helical) occupy residues Y218–F238, L280–H300, F312–T332, and F339–P358.

It belongs to the cytochrome b family. As to quaternary structure, the cytochrome bc1 complex contains 3 respiratory subunits (MT-CYB, CYC1 and UQCRFS1), 2 core proteins (UQCRC1 and UQCRC2) and probably 6 low-molecular weight proteins. Requires heme b as cofactor.

It is found in the mitochondrion inner membrane. Its function is as follows. Component of the ubiquinol-cytochrome c reductase complex (complex III or cytochrome b-c1 complex) that is part of the mitochondrial respiratory chain. The b-c1 complex mediates electron transfer from ubiquinol to cytochrome c. Contributes to the generation of a proton gradient across the mitochondrial membrane that is then used for ATP synthesis. The sequence is that of Cytochrome b (MT-CYB) from Chilabothrus strigilatus fosteri (Bimini Island boa constrictor).